The primary structure comprises 113 residues: Protein ORF3 (113 aa).

2 hydrophobic regions span residues 1 to 21 and 32 to 52; these read MGSPCALGLFCCCSSCFCLCC and AVVGGAAAVPAVVSGVTGLIL. The segment at 27–67 is interaction with host HPX; sequence ASRLAAVVGGAAAVPAVVSGVTGLILSPSPSPIFIQPTPSP. The tract at residues 47–71 is interaction with the capsid protein; the sequence is VTGLILSPSPSPIFIQPTPSPPMSF. Position 70 is a phosphoserine; by host (Ser70). A homodimerization, and interaction with host AMBP/bikunin region spans residues 71–113; that stretch reads FHNPGLELALDSRPAPLXPLGVTSPSAPPLPPVVDLPQLGLRR. Residues 90–113 are disordered; the sequence is LGVTSPSAPPLPPVVDLPQLGLRR. The segment at 94–103 is interaction with host SRC, HCK, FYN, PIK3R3 and GRB2; the sequence is SPSAPPLPPV. A PTAP/PSAP motif motif is present at residues 95–98; the sequence is PSAP.

It belongs to the hepevirus ORF3 protein family. In terms of assembly, forms homooligomers. Interacts with host SRC, HCK, FYN, PIK3R3 and GRB2 (via SH3 domain); binding does not activate the kinases. Interacts with host AMBP/bikunin and AMBP/alpha-1-microglobulin peptides. Interacts with host HPX/hemopexin. Interacts (when phosphorylated) with capsid protein ORF2. Interacts with host TSG101; this interaction plays a role in viral release from the host cell. Interacts with host SIRPA; this interaction down-regulates the phosphorylation of host IRF3. In terms of processing, palmitoylated in the N-terminus.

Its subcellular location is the host endoplasmic reticulum membrane. It is found in the host cytoplasm. The protein resides in the host cytoskeleton. The protein localises to the virion. It localises to the host cell membrane. Its function is as follows. Small multifunctional phosphoprotein involved in virion morphogenesis, egress and counteracting host innate immunity. Plays critical roles in the final steps of viral release by interacting with host TSG101, a member of the vacuolar protein-sorting pathway and using other cellular host proteins involved in vesicle formation pathway. Also acts as a viroporin and forms ion conductive pores allowing viral particle release. Impairs the generation of type I interferon by down-regulating host TLR3 and TLR7 as well as their downstream signaling pathways. Down-regulates the phosphorylation of host IRF3 via the interaction with host SIRP-alpha, thereby inhibiting IFN-I expression. Interacts with host microtubules. The protein is Protein ORF3 of Hepatitis E virus genotype 3 (isolate Human/United States/US2) (HEV-3).